The chain runs to 439 residues: Ribosomal protein uS12 methylthiotransferase RimO (439 aa).

The MTTase N-terminal domain occupies 2–114 (SKLYLMSLGC…IDEMILKKTN (113 aa)). 6 residues coordinate [4Fe-4S] cluster: Cys-11, Cys-45, Cys-77, Cys-146, Cys-150, and Cys-153. One can recognise a Radical SAM core domain in the interval 132–363 (TGSNSHAFIK…VDEVIEKSFE (232 aa)).

Belongs to the methylthiotransferase family. RimO subfamily. It depends on [4Fe-4S] cluster as a cofactor.

The protein resides in the cytoplasm. It carries out the reaction L-aspartate(89)-[ribosomal protein uS12]-hydrogen + (sulfur carrier)-SH + AH2 + 2 S-adenosyl-L-methionine = 3-methylsulfanyl-L-aspartate(89)-[ribosomal protein uS12]-hydrogen + (sulfur carrier)-H + 5'-deoxyadenosine + L-methionine + A + S-adenosyl-L-homocysteine + 2 H(+). Its function is as follows. Catalyzes the methylthiolation of an aspartic acid residue of ribosomal protein uS12. The protein is Ribosomal protein uS12 methylthiotransferase RimO of Campylobacter jejuni subsp. jejuni serotype O:23/36 (strain 81-176).